The sequence spans 142 residues: Small ribosomal subunit protein uS9 (142 aa).

Positions Lys-117–Arg-142 are disordered. The segment covering Thr-123–Arg-142 has biased composition (basic residues).

It belongs to the universal ribosomal protein uS9 family.

The chain is Small ribosomal subunit protein uS9 from Pyrobaculum aerophilum (strain ATCC 51768 / DSM 7523 / JCM 9630 / CIP 104966 / NBRC 100827 / IM2).